The primary structure comprises 762 residues: 5-methyltetrahydropteroyltriglutamate--homocysteine methyltransferase (762 aa).

Residues 18–21 (REWK) and Lys-112 each bind 5-methyltetrahydropteroyltri-L-glutamate. Residues 435–437 (IGS) and Glu-488 contribute to the L-homocysteine site. L-methionine contacts are provided by residues 435 to 437 (IGS) and Glu-488. Residues 519–520 (RC) and Trp-565 each bind 5-methyltetrahydropteroyltri-L-glutamate. Asp-603 provides a ligand contact to L-homocysteine. Asp-603 is a binding site for L-methionine. Glu-609 serves as a coordination point for 5-methyltetrahydropteroyltri-L-glutamate. Residues His-645, Cys-647, and Glu-669 each coordinate Zn(2+). His-698 functions as the Proton donor in the catalytic mechanism. Zn(2+) is bound at residue Cys-730.

The protein belongs to the vitamin-B12 independent methionine synthase family. The cofactor is Zn(2+).

The enzyme catalyses 5-methyltetrahydropteroyltri-L-glutamate + L-homocysteine = tetrahydropteroyltri-L-glutamate + L-methionine. The protein operates within amino-acid biosynthesis; L-methionine biosynthesis via de novo pathway; L-methionine from L-homocysteine (MetE route): step 1/1. In terms of biological role, catalyzes the transfer of a methyl group from 5-methyltetrahydrofolate to homocysteine resulting in methionine formation. This chain is 5-methyltetrahydropteroyltriglutamate--homocysteine methyltransferase, found in Bacillus licheniformis (strain ATCC 14580 / DSM 13 / JCM 2505 / CCUG 7422 / NBRC 12200 / NCIMB 9375 / NCTC 10341 / NRRL NRS-1264 / Gibson 46).